The sequence spans 307 residues: Ribosomal RNA small subunit methyltransferase H (307 aa).

S-adenosyl-L-methionine is bound by residues 33-35 (GGY), D51, F82, D96, and Q103.

The protein belongs to the methyltransferase superfamily. RsmH family.

It localises to the cytoplasm. The enzyme catalyses cytidine(1402) in 16S rRNA + S-adenosyl-L-methionine = N(4)-methylcytidine(1402) in 16S rRNA + S-adenosyl-L-homocysteine + H(+). Specifically methylates the N4 position of cytidine in position 1402 (C1402) of 16S rRNA. The protein is Ribosomal RNA small subunit methyltransferase H of Rickettsia peacockii (strain Rustic).